We begin with the raw amino-acid sequence, 326 residues long: Tetraacyldisaccharide 4'-kinase (326 aa).

Residue 53–60 (SVGGNGKT) participates in ATP binding.

This sequence belongs to the LpxK family.

The catalysed reaction is a lipid A disaccharide + ATP = a lipid IVA + ADP + H(+). It functions in the pathway glycolipid biosynthesis; lipid IV(A) biosynthesis; lipid IV(A) from (3R)-3-hydroxytetradecanoyl-[acyl-carrier-protein] and UDP-N-acetyl-alpha-D-glucosamine: step 6/6. Transfers the gamma-phosphate of ATP to the 4'-position of a tetraacyldisaccharide 1-phosphate intermediate (termed DS-1-P) to form tetraacyldisaccharide 1,4'-bis-phosphate (lipid IVA). The protein is Tetraacyldisaccharide 4'-kinase of Actinobacillus pleuropneumoniae serotype 7 (strain AP76).